The sequence spans 404 residues: Tryptophan synthase beta chain (404 aa).

Position 99 is an N6-(pyridoxal phosphate)lysine (lysine 99).

This sequence belongs to the TrpB family. As to quaternary structure, tetramer of two alpha and two beta chains. It depends on pyridoxal 5'-phosphate as a cofactor.

It carries out the reaction (1S,2R)-1-C-(indol-3-yl)glycerol 3-phosphate + L-serine = D-glyceraldehyde 3-phosphate + L-tryptophan + H2O. Its pathway is amino-acid biosynthesis; L-tryptophan biosynthesis; L-tryptophan from chorismate: step 5/5. In terms of biological role, the beta subunit is responsible for the synthesis of L-tryptophan from indole and L-serine. This Rhizobium rhizogenes (strain K84 / ATCC BAA-868) (Agrobacterium radiobacter) protein is Tryptophan synthase beta chain.